The chain runs to 207 residues: Serotonin N-acetyltransferase (207 aa).

The interval 1 to 28 (MSMQSTHPPKPEAPRLPPGIPESPSCQR) is disordered. Thr31 is modified (phosphothreonine; by PKA). One can recognise an N-acetyltransferase domain in the interval 35–202 (SEFRCLTPED…CSLRDHPFLR (168 aa)). Leu124 lines the substrate pocket. Acetyl-CoA contacts are provided by residues 124–126 (LAV) and 132–137 (QQGRGP). Met159 provides a ligand contact to substrate. Residue 168–170 (YER) participates in acetyl-CoA binding. Ser205 bears the Phosphoserine mark.

This sequence belongs to the acetyltransferase family. AANAT subfamily. Monomer. Interacts with several 14-3-3 proteins, including YWHAB, YWHAE, YWHAG and YWHAZ, preferentially when phosphorylated at Thr-31. Phosphorylation on Ser-205 also allows binding to YWHAZ, but with lower affinity. The interaction with YWHAZ considerably increases affinity for arylalkylamines and acetyl-CoA and protects the enzyme from dephosphorylation and proteasomal degradation. It may also prevent thiol-dependent inactivation. Post-translationally, cAMP-dependent phosphorylation on both N-terminal Thr-31 and C-terminal Ser-205 regulates AANAT activity by promoting interaction with 14-3-3 proteins.

It is found in the cytoplasm. The catalysed reaction is a 2-arylethylamine + acetyl-CoA = an N-acetyl-2-arylethylamine + CoA + H(+). The protein operates within aromatic compound metabolism; melatonin biosynthesis; melatonin from serotonin: step 1/2. Its function is as follows. Controls the night/day rhythm of melatonin production in the pineal gland. Catalyzes the N-acetylation of serotonin into N-acetylserotonin, the penultimate step in the synthesis of melatonin. This is Serotonin N-acetyltransferase (AANAT) from Pan troglodytes (Chimpanzee).